Reading from the N-terminus, the 667-residue chain is Zeaxanthin epoxidase, chloroplastic (667 aa).

A chloroplast-targeting transit peptide spans 1–59 (MGSTPFCYSINPSPSKLDFTRTHVFSPVSKQFYLDLSSFSGKPGGVSGFRSRRALLGVK). Residues 82-110 (RVLV…LVFE) and 360-373 (GFTW…LLGD) each bind FAD. The region spanning 558-612 (CIVGSEPDQDFPGMRIVIPSSQVSKMHARVIYKDGAFFLMDLRSEHGTYVTDNEG) is the FHA domain.

Requires FAD as cofactor. As to expression, expressed in leaves, stems and flowers, and at lower levels in roots and siliques.

The protein resides in the plastid. Its subcellular location is the chloroplast. The catalysed reaction is all-trans-zeaxanthin + 4 reduced [2Fe-2S]-[ferredoxin] + 2 O2 + 4 H(+) = all-trans-violaxanthin + 4 oxidized [2Fe-2S]-[ferredoxin] + 2 H2O. It functions in the pathway plant hormone biosynthesis; abscisate biosynthesis. Zeaxanthin epoxidase that plays an important role in the xanthophyll cycle and abscisic acid (ABA) biosynthesis. Converts zeaxanthin into antheraxanthin and subsequently violaxanthin. Required for resistance to osmotic and drought stresses, ABA-dependent stomatal closure, seed development and dormancy, modulation of defense gene expression and disease resistance and non-photochemical quencing (NPQ). Through its role in ABA biosynthesis, regulates the expression of stress-responsive genes such as RD29A during osmotic stress and is required for normal plant growth during vegetative development. Is required for late skotomorphogenic growth through its role in the xanthophyll carotenoids neoxanthin, violaxanthin and antheraxanthin biosynthesis. Required for beta-aminobutyric acid (BABA)-induced priming in disease resistance, tolerance to salt and drought stresses and sterility. Participates in NPQ by regulating the level of zeaxanthin in photosynthetic energy conversion. NPQ is a process that maintains the balance between dissipation and utilization of light energy to minimize the generation of oxidizing molecules and the molecular damages they can generate. In Arabidopsis thaliana (Mouse-ear cress), this protein is Zeaxanthin epoxidase, chloroplastic (ZEP).